Here is a 332-residue protein sequence, read N- to C-terminus: Methionine synthase (332 aa).

The Zn(2+) site is built by His-211, Cys-213, and Cys-296.

Belongs to the archaeal MetE family. Requires Zn(2+) as cofactor.

It functions in the pathway amino-acid biosynthesis; L-methionine biosynthesis via de novo pathway. In terms of biological role, catalyzes the transfer of a methyl group to L-homocysteine resulting in methionine formation. The physiological methyl donor is unknown. This is Methionine synthase from Saccharolobus solfataricus (strain ATCC 35092 / DSM 1617 / JCM 11322 / P2) (Sulfolobus solfataricus).